Consider the following 365-residue polypeptide: Elongation factor Tu (365 aa).

GTP contacts are provided by residues 1-7, 62-66, and 117-120; these read HVDHGKT, DCPGH, and NKCD. The region spanning 1–185 is the tr-type G domain; that stretch reads HVDHGKTTLT…ILDTYIPEPK (185 aa). T7 is a binding site for Mg(2+).

It belongs to the TRAFAC class translation factor GTPase superfamily. Classic translation factor GTPase family. EF-Tu/EF-1A subfamily. As to quaternary structure, monomer.

The protein localises to the cytoplasm. It carries out the reaction GTP + H2O = GDP + phosphate + H(+). In terms of biological role, GTP hydrolase that promotes the GTP-dependent binding of aminoacyl-tRNA to the A-site of ribosomes during protein biosynthesis. The protein is Elongation factor Tu of Buchnera aphidicola subsp. Melaphis rhois.